Consider the following 246-residue polypeptide: Mast cell protease 1 (246 aa).

The signal sequence occupies residues 1–18 (MQALLFLMALLLPSGAGA). Positions 19 to 20 (EE) are cleaved as a propeptide — activation peptide. The region spanning 21–244 (IIGGVEARPH…YVPWIKTVIN (224 aa)) is the Peptidase S1 domain. An intrachain disulfide couples Cys50 to Cys66. The Charge relay system role is filled by His65. An N-linked (GlcNAc...) asparagine glycan is attached at Asn102. Catalysis depends on Asp109, which acts as the Charge relay system. 2 cysteine pairs are disulfide-bonded: Cys143/Cys208 and Cys174/Cys187. Ser202 (charge relay system) is an active-site residue.

It belongs to the peptidase S1 family. Granzyme subfamily. Mucosal mast cells.

It localises to the secreted. It is found in the cytoplasmic granule. Its function is as follows. Has a chymotrypsin-like activity. The sequence is that of Mast cell protease 1 (Mcpt1) from Mus musculus (Mouse).